The sequence spans 943 residues: Isoleucine--tRNA ligase (943 aa).

The 'HIGH' region signature appears at 58 to 68 (PYANGKIHIGH). L-isoleucyl-5'-AMP is bound at residue glutamate 567. Positions 608-612 (KMSKS) match the 'KMSKS' region motif. Lysine 611 contacts ATP. Zn(2+)-binding residues include cysteine 906, cysteine 909, cysteine 926, and cysteine 929.

The protein belongs to the class-I aminoacyl-tRNA synthetase family. IleS type 1 subfamily. As to quaternary structure, monomer. Zn(2+) serves as cofactor.

It localises to the cytoplasm. It carries out the reaction tRNA(Ile) + L-isoleucine + ATP = L-isoleucyl-tRNA(Ile) + AMP + diphosphate. Catalyzes the attachment of isoleucine to tRNA(Ile). As IleRS can inadvertently accommodate and process structurally similar amino acids such as valine, to avoid such errors it has two additional distinct tRNA(Ile)-dependent editing activities. One activity is designated as 'pretransfer' editing and involves the hydrolysis of activated Val-AMP. The other activity is designated 'posttransfer' editing and involves deacylation of mischarged Val-tRNA(Ile). This Pseudomonas putida (strain W619) protein is Isoleucine--tRNA ligase.